Reading from the N-terminus, the 201-residue chain is Large ribosomal subunit protein uL4 (201 aa).

Residues 44–71 (RAQKTRAEVTGSGKKPWRQKGTGRARSG) form a disordered region.

Belongs to the universal ribosomal protein uL4 family. As to quaternary structure, part of the 50S ribosomal subunit.

Functionally, one of the primary rRNA binding proteins, this protein initially binds near the 5'-end of the 23S rRNA. It is important during the early stages of 50S assembly. It makes multiple contacts with different domains of the 23S rRNA in the assembled 50S subunit and ribosome. Its function is as follows. Forms part of the polypeptide exit tunnel. In Pectobacterium carotovorum subsp. carotovorum (strain PC1), this protein is Large ribosomal subunit protein uL4.